The chain runs to 963 residues: Aminopeptidase N (963 aa).

At 2–8 (AKGFYIS) the chain is on the cytoplasmic side. A helical; Signal-anchor for type II membrane protein membrane pass occupies residues 9–32 (KALGILGILLGVAAVATIIALSVV). A cytosolic Ser/Thr-rich junction region spans residues 33–64 (YAQEKNKNAEHVPQAPTSPTITTTAAITLDQS). Residues 33-963 (YAQEKNKNAE…VVLNWFIEHS (931 aa)) lie on the Extracellular side of the membrane. The metalloprotease stretch occupies residues 65 to 963 (KPWNRYRLPT…VVLNWFIEHS (899 aa)). N-linked (GlcNAc...) asparagine glycosylation is found at Asn-82 and Asn-124. Tyr-171 carries the sulfotyrosine modification. 6 N-linked (GlcNAc...) asparagine glycosylation sites follow: Asn-229, Asn-237, Asn-258, Asn-286, Asn-314, and Asn-328. 347-351 (GAMEN) lines the substrate pocket. His-383 is a Zn(2+) binding site. The active-site Proton acceptor is the Glu-384. Zn(2+)-binding residues include His-387 and Glu-406. N-linked (GlcNAc...) asparagine glycans are attached at residues Asn-506, Asn-556, Asn-569, Asn-622, Asn-646, and Asn-736. The interaction with TGEV spike glycoprotein stretch occupies residues 717–813 (KYLRKQVEPL…DQWDFAWGQL (97 aa)). Cystine bridges form between Cys-758-Cys-765 and Cys-795-Cys-831.

This sequence belongs to the peptidase M1 family. As to quaternary structure, homodimer. Interacts with SLC6A19. In terms of assembly, (Microbial infection) Interacts with TGEV and PRCoV spike glycoprotein. It depends on Zn(2+) as a cofactor. Post-translationally, sulfated. In terms of processing, N- and O-glycosylated. May undergo proteolysis and give rise to a soluble form.

The protein localises to the cell membrane. The enzyme catalyses Release of an N-terminal amino acid, Xaa-|-Yaa- from a peptide, amide or arylamide. Xaa is preferably Ala, but may be most amino acids including Pro (slow action). When a terminal hydrophobic residue is followed by a prolyl residue, the two may be released as an intact Xaa-Pro dipeptide.. Its function is as follows. Broad specificity aminopeptidase which plays a role in the final digestion of peptides generated from hydrolysis of proteins by gastric and pancreatic proteases. Also involved in the processing of various peptides including peptide hormones, such as angiotensin III and IV, neuropeptides, and chemokines. May also be involved the cleavage of peptides bound to major histocompatibility complex class II molecules of antigen presenting cells. May have a role in angiogenesis and promote cholesterol crystallization. It is able to degrade Leu-enkephalin and Met-enkephalin but not cholecystokinin CCK8, neuromedin C (GRP-10), somatostatin-14, substance P and vasoactive intestinal peptide. May have a role in amino acid transport by acting as binding partner of amino acid transporter SLC6A19 and regulating its activity. (Microbial infection) In case of porcine transmissible gastroenteritis coronavirus (TGEV) and porcine respiratory coronavirus (PRCoV) infections, serves as a receptor for TGEV and PRCoV spike glycoprotein in a species-specific manner. The chain is Aminopeptidase N (ANPEP) from Sus scrofa (Pig).